A 450-amino-acid chain; its full sequence is Pancreatic triacylglycerol lipase (450 aa).

3 disulfide bridges follow: Cys-4-Cys-10, Cys-91-Cys-102, and Cys-91-Cys-104. Residue Ser-153 is the Nucleophile of the active site. Asn-167 is a glycosylation site (N-linked (GlcNAc...) asparagine). The active-site Charge relay system is the Asp-177. 4 residues coordinate Ca(2+): Glu-188, Arg-191, Asp-193, and Asp-196. Cys-238 and Cys-262 form a disulfide bridge. His-264 (charge relay system) is an active-site residue. 3 cysteine pairs are disulfide-bonded: Cys-286/Cys-297, Cys-300/Cys-305, and Cys-434/Cys-450. In terms of domain architecture, PLAT spans 339–450 (WRYKVSVTLS…EEVLLTLNPC (112 aa)).

This sequence belongs to the AB hydrolase superfamily. Lipase family. As to quaternary structure, forms a 1:1 stoichiometric complex with (pro)colipase/CLPS.

The protein resides in the secreted. It carries out the reaction a triacylglycerol + H2O = a diacylglycerol + a fatty acid + H(+). It catalyses the reaction 1,2,3-tributanoylglycerol + H2O = dibutanoylglycerol + butanoate + H(+). The catalysed reaction is 1,2,3-tri-(9Z-octadecenoyl)-glycerol + H2O = di-(9Z)-octadecenoylglycerol + (9Z)-octadecenoate + H(+). The enzyme catalyses all-trans-retinyl hexadecanoate + H2O = all-trans-retinol + hexadecanoate + H(+). It carries out the reaction 1,2-di-(9Z-octadecenoyl)-glycerol + H2O = (9Z-octadecenoyl)-glycerol + (9Z)-octadecenoate + H(+). With respect to regulation, inhibited by bile salts, is reactivated by (pro)colipase/CLPS. Functionally, plays an important role in fat metabolism. It preferentially splits the esters of long-chain fatty acids at positions 1 and 3, producing mainly 2-monoacylglycerol and free fatty acids, and shows considerably higher activity against insoluble emulsified substrates than against soluble ones. This Sus scrofa (Pig) protein is Pancreatic triacylglycerol lipase (PNLIP).